The following is a 377-amino-acid chain: MEEPEEPADSGQSLVPVYIYSPEYVSMCDSLAKIPKRASMVHSLIEAYALHKQMRIVKPKVASMEEMATFHTDAYLQHLQKVSQEGDDDHPDSIEYGLGYDCPATEGIFDYAAAIGGATITAAQCLIDGMCKVAINWSGGWHHAKKDEASGFCYLNDAVLGILRLRRKFERILYVDLDLHHGDGVEDAFSFTSKVMTVSLHKFSPGFFPGTGDVSDVGLGKGRYYSVNVPIQDGIQDEKYYQICESVLKEVYQAFNPKAVVLQLGADTIAGDPMCSFNMTPVGIGKCLKYILQWQLATLILGGGGYNLANTARCWTYLTGVILGKTLSSEIPDHEFFTAYGPDYVLEITPSCRPDRNEPHRIQQILNYIKGNLKHVV.

A histone deacetylase region spans residues 14–324 (LVPVYIYSPE…WTYLTGVILG (311 aa)). Position 39 is a phosphoserine (S39). D101 is a substrate binding site. H143 acts as the Proton acceptor in catalysis. Substrate is bound at residue G151. A divalent metal cation contacts are provided by D178, H180, and D267. Residue Y306 participates in substrate binding.

The protein belongs to the histone deacetylase family. HD type 1 subfamily. Interacts with PEPB2-MYH11, a fusion protein consisting of the 165 N-terminal residues of CBF-beta (PEPB2) with the tail region of MYH11 produced by the inversion Inv(16)(p13q22), a translocation associated with acute myeloid leukemia of M4EO subtype. The PEPB2-MYH1 fusion protein also interacts with RUNX1, a well known transcriptional regulator, suggesting that the interaction with HDAC8 may participate in the conversion of RUNX1 into a constitutive transcriptional repressor. Interacts with CBFA2T3. Interacts with phosphorylated SMG5/EST1B; this interaction protects SMG5 from ubiquitin-mediated degradation. Associates with alpha-SMA (smooth muscle alpha-actin). The cofactor is a divalent metal cation. In terms of processing, phosphorylated by PKA on serine 39. Phosphorylation reduces deacetylase activity observed preferentially on histones H3 and H4. Weakly expressed in most tissues. Expressed at higher level in heart, brain, kidney and pancreas and also in liver, lung, placenta, prostate and kidney.

Its subcellular location is the nucleus. The protein resides in the chromosome. It is found in the cytoplasm. The catalysed reaction is N(6)-acetyl-L-lysyl-[histone] + H2O = L-lysyl-[histone] + acetate. It catalyses the reaction N(6)-acetyl-L-lysyl-[protein] + H2O = L-lysyl-[protein] + acetate. It carries out the reaction N(6)-(2E)-butenoyl-L-lysyl-[protein] + H2O = (2E)-2-butenoate + L-lysyl-[protein]. With respect to regulation, its activity is inhibited by trichostatin A (TSA), suberoylanilide hydroxamic acid (SAHA), 3-(1-methyl-4-phenylacetyl-1H-2-pyrrolyl)-N-hydroxy-2-propenamide (APHA), 4-dimethylamino-N-(6-hydroxycarbamoyethyl)benzamide-N-hydroxy-7-(4-dimethylaminobenzoyl)aminoheptanamide (MS-344), 5-(4-methyl-benzoylamino)-biphenyl-3,4'-dicarboxylic acid 3-dimethylamide 4'-hydroxyamide (CRA-A) and butyrate. Functionally, histone deacetylase that catalyzes the deacetylation of lysine residues on the N-terminal part of the core histones (H2A, H2B, H3 and H4). Histone deacetylation gives a tag for epigenetic repression and plays an important role in transcriptional regulation, cell cycle progression and developmental events. Histone deacetylases act via the formation of large multiprotein complexes. Also involved in the deacetylation of cohesin complex protein SMC3 regulating release of cohesin complexes from chromatin. May play a role in smooth muscle cell contractility. In addition to protein deacetylase activity, also has protein-lysine deacylase activity: acts as a protein decrotonylase by mediating decrotonylation ((2E)-butenoyl) of histones. This Homo sapiens (Human) protein is Histone deacetylase 8.